The following is a 227-amino-acid chain: Cytochrome c oxidase subunit 2 (227 aa).

The Mitochondrial intermembrane portion of the chain corresponds to M1–H26. The chain crosses the membrane as a helical span at residues T27–I51. Residues N52–E62 lie on the Mitochondrial matrix side of the membrane. A helical transmembrane segment spans residues L63–L81. Residues R82–S227 are Mitochondrial intermembrane-facing. Cu cation contacts are provided by H161, C196, E198, C200, H204, and M207. E198 contributes to the Mg(2+) binding site.

This sequence belongs to the cytochrome c oxidase subunit 2 family. As to quaternary structure, component of the cytochrome c oxidase (complex IV, CIV), a multisubunit enzyme composed of a catalytic core of 3 subunits and several supernumerary subunits. The complex exists as a monomer or a dimer and forms supercomplexes (SCs) in the inner mitochondrial membrane with ubiquinol-cytochrome c oxidoreductase (cytochrome b-c1 complex, complex III, CIII). Requires Cu cation as cofactor.

The protein localises to the mitochondrion inner membrane. The catalysed reaction is 4 Fe(II)-[cytochrome c] + O2 + 8 H(+)(in) = 4 Fe(III)-[cytochrome c] + 2 H2O + 4 H(+)(out). Its function is as follows. Component of the cytochrome c oxidase, the last enzyme in the mitochondrial electron transport chain which drives oxidative phosphorylation. The respiratory chain contains 3 multisubunit complexes succinate dehydrogenase (complex II, CII), ubiquinol-cytochrome c oxidoreductase (cytochrome b-c1 complex, complex III, CIII) and cytochrome c oxidase (complex IV, CIV), that cooperate to transfer electrons derived from NADH and succinate to molecular oxygen, creating an electrochemical gradient over the inner membrane that drives transmembrane transport and the ATP synthase. Cytochrome c oxidase is the component of the respiratory chain that catalyzes the reduction of oxygen to water. Electrons originating from reduced cytochrome c in the intermembrane space (IMS) are transferred via the dinuclear copper A center (CU(A)) of subunit 2 and heme A of subunit 1 to the active site in subunit 1, a binuclear center (BNC) formed by heme A3 and copper B (CU(B)). The BNC reduces molecular oxygen to 2 water molecules using 4 electrons from cytochrome c in the IMS and 4 protons from the mitochondrial matrix. The polypeptide is Cytochrome c oxidase subunit 2 (COII) (Choristoneura fumiferana (Spruce budworm moth)).